The primary structure comprises 173 residues: C-phycocyanin-3 beta subunit (173 aa).

Asn73 carries the post-translational modification N4-methylasparagine. 2 residues coordinate (2R,3E)-phycocyanobilin: Cys83 and Cys154.

This sequence belongs to the phycobiliprotein family. In terms of assembly, heterodimer of an alpha and a beta subunit, which further assembles into trimers and the trimers into hexamers. Post-translationally, contains two covalently linked bilin chromophores.

It is found in the cellular thylakoid membrane. Light-harvesting photosynthetic bile pigment-protein from the phycobiliprotein complex (phycobilisome, PBS). Phycocyanin is the major phycobiliprotein in the PBS rod. This Microchaete diplosiphon (Fremyella diplosiphon) protein is C-phycocyanin-3 beta subunit (cpcB3).